The following is a 581-amino-acid chain: ATP-dependent lipid A-core flippase (581 aa).

5 helical membrane-spanning segments follow: residues 15-35, 68-88, 152-172, 252-272, and 274-294; these read LWPIVSPFRIGLIVAAVALIL, LIVIALMIMRGLSGFVSSYCI, IIGLFVLMFYYSWQLSLILIV, PIIQLIASFALAFVLYAASFP, and IMETLTAGKITVVFSSMIALM. An ABC transmembrane type-1 domain is found at 27-309; sequence IVAAVALILN…LTNVNAQFQR (283 aa). Residues 341-577 form the ABC transporter domain; it reads IEFRNVTFCY…NGVYSQLHRM (237 aa). 375 to 382 contacts ATP; sequence GRSGSGKS.

This sequence belongs to the ABC transporter superfamily. Lipid exporter (TC 3.A.1.106) family. Homodimer.

The protein localises to the cell inner membrane. The enzyme catalyses ATP + H2O + lipid A-core oligosaccharideSide 1 = ADP + phosphate + lipid A-core oligosaccharideSide 2.. Functionally, involved in lipopolysaccharide (LPS) biosynthesis. Translocates lipid A-core from the inner to the outer leaflet of the inner membrane. Transmembrane domains (TMD) form a pore in the inner membrane and the ATP-binding domain (NBD) is responsible for energy generation. This is ATP-dependent lipid A-core flippase from Photorhabdus laumondii subsp. laumondii (strain DSM 15139 / CIP 105565 / TT01) (Photorhabdus luminescens subsp. laumondii).